The primary structure comprises 634 residues: MSETVSQNKETRGFQSEVKQLLHLMIHSLYSNKEIFLRELISNASDASDKLRFQALSNPDLYEGNADLGVKLSFDESANTLTISDNGIGMSRNDVIEHLGTIAKSGTAEFFSKLSEEQSKDSQLIGQFGVGFYSAFIVADAVTVRTRAAGLPADEAVQWHSAGEGEYTIENITKESRGTDIILHMRDEGKEFLNEWRLRDVISKYSDHIGIPVSIQTVVRDEDGKETDEKKWEQINKAQALWTRNKADISDEEYQEFYKHVSHDFADPLVWSHNRVEGKNDYTSLLYIPSKAPWDMMNRDHKSGLKLYVQRVFIMDDAEQFMPSYLRFVRGLIDSNDLPLNVSREILQDNKVTQSLRNACTKRVLTMLERMAKNDEEKYQSFWKEFGLVLKEGPAEDFANKEKIAGLLRFASTEVDSAEQTVGLASYVERMKEGQDKIYYLTADSYAAAKNSPHLEQFKAKGIEVILMFDRIDEWLMNYLTEFDGKQFQSITKAGLDLSKFEDEADKEKQKETEEEFKSVVERTKSYLGDRVKDVRTTFKLASTPAVVVTDDYEMGTQMAKLLAAAGQAVPEVKYIFEINPEHELVKRMADEADEEAFGRWVEVLLGQAMLAERGSMEDPTQFLGAINKLLTKV.

Residues 1 to 344 form an a; substrate-binding region; it reads MSETVSQNKE…SNDLPLNVSR (344 aa). The b stretch occupies residues 345-561; that stretch reads EILQDNKVTQ…DYEMGTQMAK (217 aa). A c region spans residues 562 to 634; sequence LLAAAGQAVP…GAINKLLTKV (73 aa).

The protein belongs to the heat shock protein 90 family. As to quaternary structure, homodimer.

Its subcellular location is the cytoplasm. Functionally, molecular chaperone. Has ATPase activity. The protein is Chaperone protein HtpG of Vibrio parahaemolyticus serotype O3:K6 (strain RIMD 2210633).